Here is a 292-residue protein sequence, read N- to C-terminus: Cholesterol ring-cleaving hydrolase IpdA subunit (292 aa).

Belongs to the 3-oxoacid CoA-transferase subunit A family. Heterotetramer composed of 2 IpdA subunits and 2 IpdB subunits.

The enzyme catalyses (3E)-2-(2-carboxylatoethyl)-3-methyl-6-oxocyclohex-1-ene-1-carboxyl-CoA + H2O = 6-methyl-3,7-dioxodecanedioyl-CoA. It functions in the pathway steroid metabolism; cholesterol degradation. Its function is as follows. Involved in the final steps of cholesterol and steroid degradation. Opens the last steroid ring of cholesterol by catalyzing the hydrolysis of (3E)-2-(2-carboxylatoethyl)-3-methyl-6-oxocyclohex-1-ene-1-carboxyl-CoA (COCHEA-CoA) to 6-methyl-3,7-dioxodecanedioyl-CoA (MeDODA-CoA). This is Cholesterol ring-cleaving hydrolase IpdA subunit from Mycobacterium tuberculosis (strain CDC 1551 / Oshkosh).